Consider the following 258-residue polypeptide: NAD-dependent protein deacylase (258 aa).

The 256-residue stretch at 3–258 folds into the Deacetylase sirtuin-type domain; that stretch reads ERQLEKSIEH…LPALMRGLSA (256 aa). Residue 28 to 48 coordinates NAD(+); sequence GAGMSADSGLETYRDDKTGLW. Tyr-73 and Arg-76 together coordinate substrate. Residue 109–112 coordinates NAD(+); it reads QNID. His-127 functions as the Proton acceptor in the catalytic mechanism. 4 residues coordinate Zn(2+): Cys-135, Cys-138, Cys-161, and Cys-164. NAD(+)-binding positions include 201–203 and Ala-245; that span reads GTS.

The protein belongs to the sirtuin family. Class III subfamily. The cofactor is Zn(2+).

It is found in the cytoplasm. It catalyses the reaction N(6)-acetyl-L-lysyl-[protein] + NAD(+) + H2O = 2''-O-acetyl-ADP-D-ribose + nicotinamide + L-lysyl-[protein]. The enzyme catalyses N(6)-succinyl-L-lysyl-[protein] + NAD(+) + H2O = 2''-O-succinyl-ADP-D-ribose + nicotinamide + L-lysyl-[protein]. NAD-dependent lysine deacetylase and desuccinylase that specifically removes acetyl and succinyl groups on target proteins. Modulates the activities of several proteins which are inactive in their acylated form. In Corynebacterium glutamicum (strain ATCC 13032 / DSM 20300 / JCM 1318 / BCRC 11384 / CCUG 27702 / LMG 3730 / NBRC 12168 / NCIMB 10025 / NRRL B-2784 / 534), this protein is NAD-dependent protein deacylase.